Here is a 143-residue protein sequence, read N- to C-terminus: Beta/delta-urticatoxin-Uf2b (143 aa).

The signal sequence occupies residues 1 to 18; it reads MGAIVLVALMALVASSSA. Residues 19–80 constitute a propeptide that is removed on maturation; the sequence is FSDIEHNIMK…MMLSGRPQPN (62 aa). Cystine bridges form between Cys83-Cys100, Cys90-Cys105, Cys99-Cys113, Cys115-Cys129, Cys122-Cys134, and Cys128-Cys142.

Belongs to the urticatoxin-2 family. In terms of tissue distribution, expressed in trichomes, that are stiff epidermal hairs located on the surface of petioles and leaves.

It localises to the secreted. Its function is as follows. Plant defense neurotoxin that causes pain and systemic symptoms in mammals via modulation of voltage-gated sodium channels (Nav). Potent modulator of human Nav1.5/SCN5A (EC(50)=55 nM), Nav1.6/SCN8A (EC(50)=0.86 nM), and Nav1.7/SCN9A (EC(50)=208 nM), where it shifts the activation threshold to more negative potentials and delays fast inactivation. Also shifts the voltage-dependence of steady-state fast inactivation of Nav1.6/SCN8A, but not that of Nav1.5/SCN5A or Nav1.7/SCN9A. On Nav1.7/SCN9A, principally acts by binding to extracellular loops of domain IV (Nav site 3). In vivo, intraplantar injection into mice causes numerous dose-dependent, immediate, and long-lasting spontaneous pain behaviors, while no swelling is observed in the injected paw. At the highest doses tested, systemic symptoms including hypokinesia and hypersalivation are observed. The sequence is that of Beta/delta-urticatoxin-Uf2b from Urtica ferox (Tree nettle).